The sequence spans 451 residues: uncharacterized protein (451 aa).

In terms of domain architecture, TRAM spans 2–60 (NLKVKQKIPLKIKRMGINGEGIGFYQKTLVFVPGALKGEDIYCQITSIRRNFVEAKLLK). Positions 73, 79, 82, and 162 each coordinate [4Fe-4S] cluster. Residues Gln283, Tyr312, Asp333, and Asp381 each contribute to the S-adenosyl-L-methionine site. Residue Cys408 is the Nucleophile of the active site.

The protein belongs to the class I-like SAM-binding methyltransferase superfamily. RNA M5U methyltransferase family.

This is an uncharacterized protein from Streptococcus pneumoniae serotype 4 (strain ATCC BAA-334 / TIGR4).